A 1085-amino-acid polypeptide reads, in one-letter code: Error-prone DNA polymerase (1085 aa).

This sequence belongs to the DNA polymerase type-C family. DnaE2 subfamily.

The protein resides in the cytoplasm. The catalysed reaction is DNA(n) + a 2'-deoxyribonucleoside 5'-triphosphate = DNA(n+1) + diphosphate. Functionally, DNA polymerase involved in damage-induced mutagenesis and translesion synthesis (TLS). It is not the major replicative DNA polymerase. The chain is Error-prone DNA polymerase from Symbiobacterium thermophilum (strain DSM 24528 / JCM 14929 / IAM 14863 / T).